We begin with the raw amino-acid sequence, 337 residues long: DNA-directed RNA polymerase subunit alpha (337 aa).

The tract at residues 1-233 is alpha N-terminal domain (alpha-NTD); it reads MVREEVVGST…DLFIPFLHAE (233 aa). The tract at residues 265-337 is alpha C-terminal domain (alpha-CTD); sequence KEIALKCIFI…FAIDLPKNKF (73 aa).

The protein belongs to the RNA polymerase alpha chain family. In plastids the minimal PEP RNA polymerase catalytic core is composed of four subunits: alpha, beta, beta', and beta''. When a (nuclear-encoded) sigma factor is associated with the core the holoenzyme is formed, which can initiate transcription.

Its subcellular location is the plastid. The protein resides in the chloroplast. The enzyme catalyses RNA(n) + a ribonucleoside 5'-triphosphate = RNA(n+1) + diphosphate. In terms of biological role, DNA-dependent RNA polymerase catalyzes the transcription of DNA into RNA using the four ribonucleoside triphosphates as substrates. The chain is DNA-directed RNA polymerase subunit alpha from Acorus calamus (Sweet flag).